We begin with the raw amino-acid sequence, 170 residues long: MSETGPSLQRPATRAARLSAIEQALATHIITSQSQLSKILIDEGIAVTQATLSRDLDEMHAVKTRLKDGTVAYTVGRSVVASEGEDVGERGEAQMSRVLNGLVTSVAAAGNLVVVHTPSGAAQYVASVIDKQPIEGVLGTIAGDDTVMVICTNDDTAVFRSDWLLSLASK.

Belongs to the ArgR family.

Its subcellular location is the cytoplasm. It participates in amino-acid biosynthesis; L-arginine biosynthesis [regulation]. Functionally, regulates arginine biosynthesis genes. The sequence is that of Arginine repressor from Bifidobacterium longum (strain NCC 2705).